Reading from the N-terminus, the 2149-residue chain is Non-reducing polyketide synthase PvBS090_009107 (2149 aa).

Residues 8-244 (YLFGDQTGEF…VRVPVHAPYH (237 aa)) form an N-terminal acylcarrier protein transacylase domain (SAT) region. The 432-residue stretch at 375–806 (QSKIAIIGLS…GGNTALLIED (432 aa)) folds into the Ketosynthase family 3 (KS3) domain. Catalysis depends on for beta-ketoacyl synthase activity residues C547, H682, and H724. The interval 911-1231 (FVFTGQGAQY…LSAIYLAGVD (321 aa)) is malonyl-CoA:ACP transacylase (MAT) domain. S1000 serves as the catalytic For acyl/malonyl transferase activity. The tract at residues 1290-1604 (TTSVQRIVET…RQVLNTVLPP (315 aa)) is product template (PT) domain. Positions 1294-1426 (QRIVETRDEG…CLVKFSDTHL (133 aa)) are N-terminal hotdog fold. In terms of domain architecture, PKS/mFAS DH spans 1294-1599 (QRIVETRDEG…FQGVPRQVLN (306 aa)). The active-site Proton acceptor; for dehydratase activity is H1326. The C-terminal hotdog fold stretch occupies residues 1454 to 1599 (SHRMHRGMFY…FQGVPRQVLN (146 aa)). The Proton donor; for dehydratase activity role is filled by D1512. A disordered region spans residues 1604-1631 (PAGGSKAAPRTTARAVPPPPINVEKPKS). In terms of domain architecture, Carrier 1 spans 1649-1726 (SAGPSVLVQA…DLKQLLSQAS (78 aa)). Position 1686 is an O-(pantetheine 4'-phosphoryl)serine (S1686). Low complexity-rich tracts occupy residues 1722–1731 (LSQASPSDSS) and 1744–1755 (SSSTEPSTPGTP). The tract at residues 1722–1763 (LSQASPSDSSDSSEESHYSFRDSSSTEPSTPGTPAFFSPKRG) is disordered. Residues 1769-1846 (VGESETIKTI…AVETALDLKP (78 aa)) enclose the Carrier 2 domain. O-(pantetheine 4'-phosphoryl)serine is present on S1806. Residues 1875-2147 (STHPPATSIL…KLSAFIGRAM (273 aa)) are thioesterase (TE) domain. S1965 (for thioesterase activity) is an active-site residue.

The enzyme catalyses 6 malonyl-CoA + acetyl-CoA + 6 H(+) = naphtopyrone YWA1 + 6 CO2 + 7 CoA + H2O. The protein operates within secondary metabolite biosynthesis. It functions in the pathway pigment biosynthesis. Its function is as follows. Non-reducing polyketide synthase; part of the gene cluster 24 that mediates the biosynthesis of a pigment with an aromatic structure protecting the pigmented fungus from both ionizing and non-ionizing radiations based on a mechanism similar to melanin, that is, free radical quenching and spherical spatial arrangement. Catalyzes the biosynthesis of the gamma-naphthopyrone precursor YWA1, via condensation of one acetyl-CoA starter unit with 6 malonyl-CoA units. YWA1 is probably further processed by the additional enzymes present within the cluster 24, however these additional steps have not been characterized yet. YWA1 is not converted to DHN-melanin in Byssochlamys spectabilis since the use of the DHN-melanin pathway inhibitor pyroquilon does not result in a loss of pigmentation. The sequence is that of Non-reducing polyketide synthase PvBS090_009107 from Byssochlamys spectabilis (Paecilomyces variotii).